A 309-amino-acid chain; its full sequence is MLGRHECTISESVSALDPTAQEPEYTLVPSTSRDLVRDMTLNMEDAQAHLKEHGWVKIPAVLSKAEAEDALSRLWEAKAASEARGECTFQPILDPNPANVRVFYLPELDAYWRDMLVNPTALDLAKSLLGDQLLVSNFSANIARPGAESMALHSDQSIVLPAPWLDVWAVNVIWCLTRMTKENGATLYIPGSNKWTTWEDVPDNAPDLLVPFEADAGDIVVIDGRLWHTSGSNVTEDEDRAILFAYYSAPHMRPLTNWSAKLPKELQETLSPQLKELLALSHIGYVVKGDLTYMAQKYPSEKGTTAVSA.

The Fe cation site is built by histidine 153, aspartate 155, and histidine 228.

This sequence belongs to the PhyH family. Requires Fe cation as cofactor.

It carries out the reaction 5-dehydro-6-demethoxyfumagillol + 2-oxoglutarate + O2 = 5-dehydro-6-demethoxy-6-hydroxyfumagillol + succinate + CO2. Its pathway is secondary metabolite biosynthesis; terpenoid biosynthesis. Functionally, dioxygenase; part of the gene cluster that mediates the biosynthesis of fumagillin, a meroterpenoid that has numerous biological activities including irreversible inhibition of human type 2 methionine aminopeptidase (METAP2). Within the pathway, the dioxygenase af480 acts as a 5-dehydro-6-demethoxyfumagillol dioxygenase that hydroylates 5-keto-demethoxyfumagillol at position C-6. The pathway begins with the conversion of farnesyl pyrophosphate (FPP) to beta-trans-bergamotene by the membrane-bound beta-trans-bergamotene synthase af520. The multifunctional cytochrome P450 monooxygenase af510 then converts beta-trans-bergamotene into 5-keto-demethoxyfumagillol via several oxydation steps. 5-keto-demethoxyfumagillol is then subjected to successive C-6 hydroxylation and O-methylation by the dioxygenase af480 and O-methyltransferase af390-400, respectively, to yield 5-keto-fumagillol, which is then stereoselectively reduced by the keto-reductase af490 to 5R-hydroxy-seco-sesquiterpene. The next step is the polyketide transferase af380-catalyzed transfer of a dodecapentaenoyl group synthesized by the polyketide synthase af370 onto 5R-hydroxy-seco-sesquiterpene which leads to the production of prefumagillin. Finally, oxidative cleavage by the monooxygenase af470 converts prefumagillin to fumagillin. The polypeptide is Dioxygenase af480 (Aspergillus fumigatus (strain ATCC MYA-4609 / CBS 101355 / FGSC A1100 / Af293) (Neosartorya fumigata)).